A 945-amino-acid polypeptide reads, in one-letter code: 26S proteasome regulatory subunit RPN2 (945 aa).

Position 2 is an N-acetylserine (S2). PC repeat units lie at residues 366-399, 403-440, 445-479, 480-514, 516-549, 550-585, 586-618, 620-654, 655-692, and 698-734; these read TATA…SSRF, GSLY…EDVD, GASL…TSGE, AAAL…GNIT, GLAV…LLRY, GGAF…DVRR, AAVI…AHVR, GTAF…FVRQ, AAMI…KHQE, and GACV…VGLV. T801 carries the post-translational modification Phosphothreonine. A compositionally biased stretch (basic residues) spans 810–819; the sequence is AKARAKKTKK. The segment at 810–851 is disordered; sequence AKARAKKTKKEKGPNEEEKKKEHEEKEKERETNKKGIKETKE. Positions 820–851 are enriched in basic and acidic residues; that stretch reads EKGPNEEEKKKEHEEKEKERETNKKGIKETKE. T932 is subject to Phosphothreonine.

Belongs to the proteasome subunit S1 family. Interacts with UBR1. N-acetylated by NAT1.

Functionally, acts as a regulatory subunit of the 26S proteasome which is involved in the ATP-dependent degradation of ubiquitinated proteins. The polypeptide is 26S proteasome regulatory subunit RPN2 (RPN2) (Saccharomyces cerevisiae (strain ATCC 204508 / S288c) (Baker's yeast)).